Here is a 667-residue protein sequence, read N- to C-terminus: MADLSSRVNELHDLLNQYSYEYYVEDNPSVPDSEYDKLLHELIKIEEEHPEYKTVDSPTVRVGGEAQASFNKVNHDTPMLSLGNAFNEDDLRKFDQRIREQIGNVEYMCELKIDGLAVSLKYVDGYFVQGLTRGDGTTGEDITENLKTIHAIPLKMKEPLNVEVRGEAYMPRRSFLRLNEEKEKNDEQLFANPRNAAAGSLRQLDSKLTAKRKLSVFIYSVNDFTDFNARSQSEALDELDKLGFTTNKNRARVNNIDGVLEYIEKWTSQRESLPYDIDGIVIKVNDLDQQDEMGFTQKSPRWAIAYKFPAEEVVTKLLDIELSIGRTGVVTPTAILEPVKVAGTTVSRASLHNEDLIHDRDIRIGDSVVVKKAGDIIPEVVRSIPERRPEGAVTYHMPTHCPSCGHELVRIEGEVALRCINPKCQAQLVEGLIHFVSRQAMNIDGLGTKIIQQLYQSELIKDVADIFYLTEEDLLPLDRMGQKKVDNLLAAIQQAKDNSLENLLFGLGIRHLGVKASQVLAEKYETIDRLLTVTEAELVEIHDIGDKVAQSVVTYLENEDIRALIQKLKDKHVNMIYKGIKTSDIEGHPEFSGKTIVLTGKLHQMTRNEASKWLASQGAKVTSSVTKNTDVVIAGEDAGSKLTKAQSLGIEIWTEQQFVDKQNELNS.

NAD(+) is bound by residues 32–36 (DSEYD), 81–82 (SL), and glutamate 110. The active-site N6-AMP-lysine intermediate is the lysine 112. The NAD(+) site is built by arginine 133, glutamate 167, lysine 283, and lysine 307. Zn(2+) contacts are provided by cysteine 401, cysteine 404, cysteine 419, and cysteine 424. Residues 586–667 (EGHPEFSGKT…FVDKQNELNS (82 aa)) form the BRCT domain.

Belongs to the NAD-dependent DNA ligase family. LigA subfamily. Requires Mg(2+) as cofactor. The cofactor is Mn(2+).

It carries out the reaction NAD(+) + (deoxyribonucleotide)n-3'-hydroxyl + 5'-phospho-(deoxyribonucleotide)m = (deoxyribonucleotide)n+m + AMP + beta-nicotinamide D-nucleotide.. DNA ligase that catalyzes the formation of phosphodiester linkages between 5'-phosphoryl and 3'-hydroxyl groups in double-stranded DNA using NAD as a coenzyme and as the energy source for the reaction. It is essential for DNA replication and repair of damaged DNA. The sequence is that of DNA ligase from Staphylococcus aureus (strain bovine RF122 / ET3-1).